Reading from the N-terminus, the 979-residue chain is Zinc finger BED domain-containing protein 6 (979 aa).

Positions 1-89 (MSVCTLSVPV…ILAKKFSKDL (89 aa)) are required for nucleolar localization. The BED-type 1 zinc finger occupies 130–187 (AKTSIVWHFFHVDPQYTWRAICNLCEKSVSRGKPGSHLGTSTLQRHLQARHSPHWTRA). Positions 151, 154, 175, and 180 each coordinate Zn(2+). The segment at 207-232 (PSSGSNGSFEYIPTDPLDDNRMGKKH) is disordered. The BED-type 2 zinc-finger motif lies at 264-321 (AKTSAVWNFFYTDPQHISRAVCNICKRSVSRGRPGSHLGTSTLQRHLQATHPIHWAVA). Zn(2+)-binding residues include Cys285, Cys288, His309, and His314. Residues 333 to 383 (DEAETERSDLLSDTLHGEKSTGSQDLTAEDLSDSDSDEPMLEVENRSESPI) are disordered. Residues 337–351 (TERSDLLSDTLHGEK) are compositionally biased toward basic and acidic residues. Residues 359–373 (TAEDLSDSDSDEPML) show a composition bias toward acidic residues. Ser381 carries the phosphoserine modification. Residues 866-948 (VVDEYFKEKY…EQLMFLKMNL (83 aa)) are HATC (Hobo-Ac-Tam3) domain.

In terms of tissue distribution, expressed in pancreatic islet cells (at protein level).

Its subcellular location is the nucleus. It is found in the nucleolus. The protein localises to the cytoplasm. Functionally, transcriptional repressor which binds to the consensus sequence 5'-GCTCGC-3', transcription regulation may be tissue-specific. Regulates the expression of target genes such as: IGF2, PGAP6/TMEM8, ENHO, and PIANP. Acts as a transcriptional repressor of growth factor IGF2, thereby negatively regulating postnatal growth of muscles and internal organs, especially in females. Negatively regulates myoblast differentiation and myoblast mitochondrial activity via its regulation of IGF2 transcription. Negatively regulates the cell cycle of myoblasts, potentially via transcriptional regulation of the E2F family of transcription factors such as: E2F1 and E2F2. Positively regulates the cell cycle and survival of pancreatic beta cells. Binds to the CDH2 gene and may directly repress CDH2 transcription. Probably by controlling CDH2 expression, regulates pancreatic beta cell adhesion, and formation of cell-to-cell junctions between pancreatic beta cells and neural crest stem cells. May also play a role in embryonic beta cell differentiation. May play a role in insulin sensitivity and glucose clearance. The protein is Zinc finger BED domain-containing protein 6 of Homo sapiens (Human).